Consider the following 531-residue polypeptide: Importin subunit alpha-3 (531 aa).

Residues 1–58 (MSLRPSAKTEVRRNRYKVAVDAEEGRRRREDNLVEIRKNKREENLQKKRFTSSMAFGS) enclose the IBB domain. ARM repeat units follow at residues 111 to 153 (INEV…TSEN), 154 to 198 (TNVI…CRDL), 199 to 236 (VLSY…RGKP), 237 to 281 (PPAF…DKIQ), 282 to 321 (AVIE…DDLQ), 322 to 364 (TQMV…NADQ), 365 to 405 (IQAV…GGTH), and 406 to 447 (DQIK…VVGE). The tract at residues 500-524 (DNEEEGNDENHAPQSGFQFGSTNVP) is disordered. Residues 511–524 (APQSGFQFGSTNVP) show a composition bias toward polar residues.

Belongs to the importin alpha family. In terms of assembly, forms a complex with importin subunit beta-1. Interacts with PRL1. Interacts with A.tumefaciens VirD2 and VirE2.

It localises to the nucleus. Its function is as follows. Binds to conventional NLS motifs and mediates nuclear protein import across the nuclear envelope. Acts as a cellular receptor for the nuclear import of the virD2 protein of Agrobacterium, but is not essential for Agrobacterium-mediated root transformation. May be involved in the regulation of pathogen-induced salicylic acid accumulation. The polypeptide is Importin subunit alpha-3 (Arabidopsis thaliana (Mouse-ear cress)).